The following is a 689-amino-acid chain: PR domain zinc finger protein 8 (689 aa).

Residues 16–131 (KAVQQCLTDI…KDEELLVWYG (116 aa)) form the SET domain. An S-adenosyl-L-methionine-binding site is contributed by Y130. The segment at 155 to 183 (YTCLECSQRFQFEFPYVAHLRFRCPKRLH) adopts a C2H2-type 1 zinc-finger fold. Disordered stretches follow at residues 185-333 (ADIS…VGGR) and 397-506 (SLQE…QPAR). Positions 193 to 210 (QGGGVGTKDHGGGGGGGK) are enriched in gly residues. 2 stretches are compositionally biased toward low complexity: residues 241-258 (PESSNPSAAAGGSSAKPS) and 273-286 (GGSSCSPAQSLSSG). Gly residues predominate over residues 322-333 (EGGGGAGLVGGR). Positions 423–433 (STPAAASPVGA) are enriched in low complexity. Residues 472-491 (TSGGGGTGAGAAGGAGGGQG) are compositionally biased toward gly residues. 2 consecutive C2H2-type zinc fingers follow at residues 625–648 (NWCAKCNASFRMTSDLVYHMRSHH) and 666–688 (LKCPICNESFRERHHLSRHMTSH).

It belongs to the class V-like SAM-binding methyltransferase superfamily. In terms of assembly, interacts with EPM2A and NHLRC1. This interaction sequesters EPM2A and NHLRC1 to the nucleus. Interacts with BHLHE22. As to expression, expressed in brain, heart, skeletal muscle, testes, prostate.

The protein localises to the nucleus. Its function is as follows. Probable histone methyltransferase, preferentially acting on 'Lys-9' of histone H3. Involved in the control of steroidogenesis through transcriptional repression of steroidogenesis marker genes such as CYP17A1 and LHCGR. Forms with BHLHE22 a transcriptional repressor complex controlling genes involved in neural development and neuronal differentiation. In the retina, it is required for rod bipolar and type 2 OFF-cone bipolar cell survival. In Homo sapiens (Human), this protein is PR domain zinc finger protein 8 (PRDM8).